The primary structure comprises 898 residues: Protein kintoun (898 aa).

Disordered regions lie at residues 558–680 (GELK…VESD) and 765–822 (ILGQ…SGIS). A compositionally biased stretch (basic and acidic residues) spans 575–602 (INTRTVEDDTKVAKENVKKVDQETAHEG). Residues 603-616 (KKSKKNQRRKNKKR) are compositionally biased toward basic residues. The span at 641 to 656 (NEANSFEGTGSSSEAT) shows a compositional bias: polar residues.

Belongs to the PIH1 family. Kintoun subfamily.

The protein localises to the cytoplasm. In terms of biological role, required for cytoplasmic pre-assembly of axonemal dyneins, thereby playing a central role in motility in cilia and flagella. Involved in pre-assembly of dynein arm complexes in the cytoplasm before intraflagellar transport loads them for the ciliary compartment. This Aedes aegypti (Yellowfever mosquito) protein is Protein kintoun.